Reading from the N-terminus, the 181-residue chain is Putative manganese efflux pump MntP (181 aa).

5 consecutive transmembrane segments (helical) span residues 35–55, 59–79, 102–122, 126–146, and 161–181; these read IIFG…GSIA, VADW…LLMI, AATG…LAFI, ILIT…LGVM, and ILGG…HLTM.

It belongs to the MntP (TC 9.B.29) family.

The protein resides in the cell inner membrane. Probably functions as a manganese efflux pump. The chain is Putative manganese efflux pump MntP from Nitrosomonas eutropha (strain DSM 101675 / C91 / Nm57).